Reading from the N-terminus, the 90-residue chain is uncharacterized protein (90 aa).

Residues 15–34 traverse the membrane as a helical segment; sequence HVLAISTFIATAAVASYFTT. Residues 34–65 form a disordered region; it reads TKPKTKNEGKNSSALSQQKSGESSNSDAMGKD. The span at 43 to 60 shows a compositional bias: polar residues; the sequence is KNSSALSQQKSGESSNSD. Asn-44 carries N-linked (GlcNAc...) asparagine glycosylation.

The protein resides in the mitochondrion membrane. This is an uncharacterized protein from Saccharomyces cerevisiae (strain ATCC 204508 / S288c) (Baker's yeast).